A 400-amino-acid polypeptide reads, in one-letter code: Acetate kinase (400 aa).

Asn10 serves as a coordination point for Mg(2+). Lys17 lines the ATP pocket. Arg91 contributes to the substrate binding site. The Proton donor/acceptor role is filled by Asp150. ATP-binding positions include 210–214 (HLGNG), 285–287 (DCR), and 333–337 (GIGEN). Glu387 contacts Mg(2+).

This sequence belongs to the acetokinase family. As to quaternary structure, homodimer. The cofactor is Mg(2+). It depends on Mn(2+) as a cofactor.

Its subcellular location is the cytoplasm. It catalyses the reaction acetate + ATP = acetyl phosphate + ADP. It participates in metabolic intermediate biosynthesis; acetyl-CoA biosynthesis; acetyl-CoA from acetate: step 1/2. Catalyzes the formation of acetyl phosphate from acetate and ATP. Can also catalyze the reverse reaction. The polypeptide is Acetate kinase (Escherichia coli O157:H7).